The following is a 368-amino-acid chain: Spore germination protein B2 (368 aa).

10 helical membrane passes run 10 to 30 (FMQT…LTLP), 43 to 63 (LMIL…LPFL), 82 to 102 (FIGF…VCFQ), 120 to 140 (MAVV…GGVY), 145 to 165 (VYAY…MFSF), 187 to 207 (LFPK…LVPF), 217 to 237 (AVAL…LIVI), 282 to 302 (FACM…IFHL), 308 to 328 (AWLL…PKDL), and 338 to 358 (LGYA…LSWI).

Belongs to the amino acid-polyamine-organocation (APC) superfamily. Spore germination protein (SGP) (TC 2.A.3.9) family.

It is found in the cell membrane. In terms of biological role, involved in the response to the germinative mixture of L-asparagine, glucose, fructose and potassium ions (AGFK). Could be an amino acid transporter. Cannot stimulate germination in the absence of gerD and gerK gene products (fructose and glucose receptors, respectively). In Bacillus subtilis (strain 168), this protein is Spore germination protein B2 (gerBB).